The sequence spans 284 residues: Tropomyosin-1 (284 aa).

A coiled-coil region spans residues 1 to 284; it reads MDAIKKKMLA…DSTFAELAGY (284 aa). Positions 103–131 are disordered; sequence EERLQSATEKLEEASKAADESERGRKVLE.

It belongs to the tropomyosin family. As to quaternary structure, homodimer.

Its function is as follows. Tropomyosin, in association with the troponin complex, plays a central role in the calcium dependent regulation of muscle contraction. This is Tropomyosin-1 from Biomphalaria glabrata (Bloodfluke planorb).